A 769-amino-acid polypeptide reads, in one-letter code: Protein transport protein sec39 (769 aa).

It belongs to the SEC39 family. In terms of assembly, component of a peripheral membrane protein complex consisting of dsl1, sec39 and tip20.

Its subcellular location is the endoplasmic reticulum membrane. Its function is as follows. Required for protein transport between the Golgi and the endoplasmic reticulum. May contribute to tethering of coatomer-coated retrograde transport vesicles to the ER membrane through interaction with and stabilization of the SNARE complex. This is Protein transport protein sec39 from Schizosaccharomyces pombe (strain 972 / ATCC 24843) (Fission yeast).